Consider the following 244-residue polypeptide: Aspartate/glutamate leucyltransferase (244 aa).

The protein belongs to the R-transferase family. Bpt subfamily.

It localises to the cytoplasm. The catalysed reaction is N-terminal L-glutamyl-[protein] + L-leucyl-tRNA(Leu) = N-terminal L-leucyl-L-glutamyl-[protein] + tRNA(Leu) + H(+). It carries out the reaction N-terminal L-aspartyl-[protein] + L-leucyl-tRNA(Leu) = N-terminal L-leucyl-L-aspartyl-[protein] + tRNA(Leu) + H(+). Functionally, functions in the N-end rule pathway of protein degradation where it conjugates Leu from its aminoacyl-tRNA to the N-termini of proteins containing an N-terminal aspartate or glutamate. This Bordetella bronchiseptica (strain ATCC BAA-588 / NCTC 13252 / RB50) (Alcaligenes bronchisepticus) protein is Aspartate/glutamate leucyltransferase.